Here is a 273-residue protein sequence, read N- to C-terminus: Undecaprenyl-diphosphatase (273 aa).

The next 7 membrane-spanning stretches (helical) occupy residues 6–26, 45–65, 90–110, 116–136, 190–210, 222–242, and 252–272; these read SLLIAAILGVVEGLTEFLPVS, AKTFEVVIQLGSILAVVVMFW, LTLIHILLGMIPAMVLGLVFH, LFNPINVMYALVVGGLLLIAA, YAASEFSFLLAVPMMMGATVL, ADIPMFAVGFVTAFVVALIAI, and ISFIPFAIYRFVVAAAVYVVF.

This sequence belongs to the UppP family.

Its subcellular location is the cell inner membrane. It catalyses the reaction di-trans,octa-cis-undecaprenyl diphosphate + H2O = di-trans,octa-cis-undecaprenyl phosphate + phosphate + H(+). In terms of biological role, catalyzes the dephosphorylation of undecaprenyl diphosphate (UPP). Confers resistance to bacitracin. This is Undecaprenyl-diphosphatase from Salmonella arizonae (strain ATCC BAA-731 / CDC346-86 / RSK2980).